A 396-amino-acid chain; its full sequence is Probable 20S rRNA accumulation protein 4 (396 aa).

The protein belongs to the TSR4 family.

It localises to the cytoplasm. The protein resides in the nucleus. It is found in the nucleolus. Required for processing of the 20S pre-rRNA at site D to generate mature 18S rRNA. In Schizosaccharomyces pombe (strain 972 / ATCC 24843) (Fission yeast), this protein is Probable 20S rRNA accumulation protein 4.